Consider the following 260-residue polypeptide: Indole-3-glycerol phosphate synthase (260 aa).

The protein belongs to the TrpC family.

It carries out the reaction 1-(2-carboxyphenylamino)-1-deoxy-D-ribulose 5-phosphate + H(+) = (1S,2R)-1-C-(indol-3-yl)glycerol 3-phosphate + CO2 + H2O. It participates in amino-acid biosynthesis; L-tryptophan biosynthesis; L-tryptophan from chorismate: step 4/5. This chain is Indole-3-glycerol phosphate synthase, found in Leifsonia xyli subsp. xyli (strain CTCB07).